Consider the following 646-residue polypeptide: Lipoteichoic acid synthase (646 aa).

The Cytoplasmic segment spans residues 1 to 7 (MSLPKKK). Residues 8–28 (IGIFAFFLLTVFTITLKTYFS) form a helical membrane-spanning segment. The Extracellular portion of the chain corresponds to 29–43 (YYVDFSLGVKGLVQN). A helical transmembrane segment spans residues 44–64 (LILIMNPYSLIALVLSVFLFF). Residues 65–68 (KGKK) lie on the Cytoplasmic side of the membrane. A helical membrane pass occupies residues 69-89 (AFWFIFIGGFLLTFLLYANVV). Residues 90-119 (YFRFFSDFLTFSTLNQAGNVESMGGAVSAS) are Extracellular-facing. The helical transmembrane segment at 120 to 140 (FKWYDFVYFIDTIIYLAILIF) threads the bilayer. Residues 141–153 (KRKWLDNRAFSKK) lie on the Cytoplasmic side of the membrane. The chain crosses the membrane as a helical span at residues 154–174 (FVPVVMATSVALFFLNLAFAE). Residues 175-646 (TDRPELLTRT…KSGPKGNEKK (472 aa)) are Extracellular-facing. E255 and T300 together coordinate Mn(2+). T300 is an active-site residue. A substrate-binding site is contributed by H416. Residues D475 and H476 each coordinate Mn(2+).

This sequence belongs to the LTA synthase family. In terms of processing, proteolytically cleaved.

It is found in the cell membrane. The protein resides in the secreted. It participates in cell wall biogenesis; lipoteichoic acid biosynthesis. Catalyzes the polymerization of lipoteichoic acid (LTA) polyglycerol phosphate, a reaction that presumably uses phosphatidylglycerol (PG) as substrate. Is required for staphylococcal growth and cell division process. In Staphylococcus epidermidis (strain ATCC 12228 / FDA PCI 1200), this protein is Lipoteichoic acid synthase (ltaS).